A 64-amino-acid chain; its full sequence is Large ribosomal subunit protein bL33 (64 aa).

Basic and acidic residues-rich tracts occupy residues 16 to 25 (EARTSSDPKR) and 33 to 42 (TTEKNRRNTT). The interval 16–42 (EARTSSDPKRSNGVSRYTTEKNRRNTT) is disordered.

The protein belongs to the bacterial ribosomal protein bL33 family.

The chain is Large ribosomal subunit protein bL33 from Prochlorococcus marinus (strain MIT 9301).